A 262-amino-acid polypeptide reads, in one-letter code: Merozoite surface protein 2 (262 aa).

The N-terminal stretch at 1–20 is a signal peptide; sequence MKVIKTLSIINFFIFVTFNI. Residues Asn22 and Asn36 are each glycosylated (N-linked (GlcNAc...) asparagine). Residues 44 to 188 form a polymorphic region region; it reads AESKPPTGTG…EQTESPELQS (145 aa). Positions 44–223 are disordered; the sequence is AESKPPTGTG…DSQKECTDGN (180 aa). Residues 51–66 are compositionally biased toward gly residues; the sequence is GTGGSGSAGSGAGASA. A compositionally biased stretch (low complexity) spans 67-111; the sequence is GNGANPGADAERSPSTPATPATPATTTTTTTTNDAEASTSTSSEN. The segment covering 112–127 has biased composition (basic and acidic residues); that stretch reads PNHKNAETNPKGKGEV. 2 stretches are compositionally biased toward polar residues: residues 129–155 and 162–190; these read KPNQANKETQNNSNVQQDSQTKSNVPP and KSPTAQPEQAENSAPTAEQTESPELQSAP. Asn139 is a glycosylation site (N-linked (GlcNAc...) asparagine). N-linked (GlcNAc...) asparagine glycosylation is present at Asn211. A disulfide bridge links Cys219 with Cys227. 2 N-linked (GlcNAc...) asparagine glycosylation sites follow: Asn235 and Asn236. Asn236 carries GPI-anchor amidated asparagine lipidation. Positions 237–262 are cleaved as a propeptide — removed in mature form; that stretch reads SSNIASINKFVVLISATLVLSFAIFI.

The protein resides in the cell membrane. May play a role in the merozoite attachment to the erythrocyte. The sequence is that of Merozoite surface protein 2 from Plasmodium falciparum (isolate Camp / Malaysia).